Here is a 448-residue protein sequence, read N- to C-terminus: Homogentisate 1,2-dioxygenase (448 aa).

The Proton acceptor role is filled by histidine 303. Fe cation is bound by residues histidine 346 and glutamate 352. Residues tyrosine 361 and histidine 382 each contribute to the homogentisate site. Histidine 382 provides a ligand contact to Fe cation.

The protein belongs to the homogentisate dioxygenase family. As to quaternary structure, hexamer; dimer of trimers. The cofactor is Fe cation.

The catalysed reaction is homogentisate + O2 = 4-maleylacetoacetate + H(+). It participates in amino-acid degradation; L-phenylalanine degradation; acetoacetate and fumarate from L-phenylalanine: step 4/6. Functionally, involved in the catabolism of homogentisate (2,5-dihydroxyphenylacetate or 2,5-OH-PhAc), a central intermediate in the degradation of phenylalanine and tyrosine. Catalyzes the oxidative ring cleavage of the aromatic ring of homogentisate to yield maleylacetoacetate. In Nitrobacter hamburgensis (strain DSM 10229 / NCIMB 13809 / X14), this protein is Homogentisate 1,2-dioxygenase.